We begin with the raw amino-acid sequence, 396 residues long: MTHVPQIKIPATYIRGGTSKGVFFRLQDLPETAQVPGPARDALLMRVIGSPDPYGKQIDGMGAATSSTSKTVILSKSTRPDHDVDYLFGQVSIDQPFVDWSGNCGNLSAAVGPFAISAGLVDASRIPHNGVAVVRIWQANIGKTIIGHVPVTNGEVQETGDFELDGVTFPAAEVQLEFMDPAAEEEGAGGAMFPTGNVVDDLEVPAVGTLKATMINAGIPTIFVNAESIGYTGTELQDAINSDTRALAMFEDHPCYGALRMGLIKNVDEAAKRQHTPKVAFVRQAGDYVASSGKKVAAADVDLLVRALSMGKLHHAMMGTAAVAIGTAAAIPGTLVNLAAGGGERNAVRFGHPSGTLRVGAEAQQVDGEWAVKKAIMSRSARVLMEGWVRVPGDAF.

Residues S19 and 66-70 (SSTSK) contribute to the substrate site. The active-site Proton donor/acceptor is C104. C104 bears the Cysteine sulfinic acid (-SO2H) mark. Residues N106, K278, S309, and H314 each coordinate substrate. The Proton donor/acceptor role is filled by M318. G319 is a substrate binding site.

This sequence belongs to the PrpF family. In terms of assembly, homodimer.

It carries out the reaction 2-methyl-trans-aconitate = 2-methyl-cis-aconitate. The protein operates within organic acid metabolism; propanoate degradation. Functionally, catalyzes the isomerization of 2-methyl-trans-aconitate to yield 2-methyl-cis-aconitate through a base-catalyzed proton abstraction coupled with a rotation about C2-C3 bond of 2-methyl-aconitate. This chain is 2-methyl-aconitate isomerase, found in Cupriavidus necator (Alcaligenes eutrophus).